The sequence spans 49 residues: MRVKITLACTECKQRNYNTTKEKKNHPDRMETKKFCKFCKSHTLHKETK.

It belongs to the bacterial ribosomal protein bL33 family.

This chain is Large ribosomal subunit protein bL33, found in Lachnoclostridium phytofermentans (strain ATCC 700394 / DSM 18823 / ISDg) (Clostridium phytofermentans).